Reading from the N-terminus, the 438-residue chain is Phosphoribosylamine--glycine ligase (438 aa).

Positions 108-316 constitute an ATP-grasp domain; the sequence is REFMERNDIP…LVEIAEGIVK (209 aa). 135–194 provides a ligand contact to ATP; that stretch reads IDEYGKPVVVKPLGLTGGKGVKVVGYQLKDNEEAKEYAEYLIKKDGKVLIEERTDGVEFT. Mg(2+) is bound by residues Gln274, Glu286, and Asn288. Mn(2+) contacts are provided by Gln274, Glu286, and Asn288.

Belongs to the GARS family. Mg(2+) is required as a cofactor. Mn(2+) serves as cofactor.

The enzyme catalyses 5-phospho-beta-D-ribosylamine + glycine + ATP = N(1)-(5-phospho-beta-D-ribosyl)glycinamide + ADP + phosphate + H(+). The protein operates within purine metabolism; IMP biosynthesis via de novo pathway; N(1)-(5-phospho-D-ribosyl)glycinamide from 5-phospho-alpha-D-ribose 1-diphosphate: step 2/2. In Pyrococcus abyssi (strain GE5 / Orsay), this protein is Phosphoribosylamine--glycine ligase.